The primary structure comprises 529 residues: NADPH-dependent thioredoxin reductase 3 (529 aa).

Residues 1-67 (MAASPKIGIG…SSDSLRLRVS (67 aa)) constitute a chloroplast transit peptide. The disordered stretch occupies residues 54–78 (TRTRSSDSLRLRVSATANSPSSSSS). Positions 64–78 (LRVSATANSPSSSSS) are enriched in low complexity. Residues 91 to 94 (SGPA), 113 to 120 (EGYQMGGV), asparagine 133, valine 166, and cysteine 220 contribute to the FAD site. A disulfide bridge links cysteine 217 with cysteine 220. Residues threonine 240, arginine 265, isoleucine 324, and tyrosine 344 each contribute to the NADP(+) site. FAD is bound by residues aspartate 364 and 371 to 374 (RQAV). NADP(+) is bound at residue arginine 371. A Thioredoxin domain is found at 403–529 (PQTEEAKKEF…EYREFIEANK (127 aa)). Residues cysteine 454 and cysteine 457 each act as nucleophile in the active site. Cysteine 454 and cysteine 457 form a disulfide bridge.

Belongs to the class-II pyridine nucleotide-disulfide oxidoreductase family. In terms of assembly, may homodimerize. Interacts with the 2-Cys peroxiredoxin BAS1. It depends on FAD as a cofactor.

It is found in the plastid. It localises to the chloroplast. The enzyme catalyses [thioredoxin]-dithiol + NADP(+) = [thioredoxin]-disulfide + NADPH + H(+). Its function is as follows. Thioredoxin reductase (TR) that exhibits both TR and thioredoxin (Trx) activities. Contains a C-terminal functional Trx domain. Functions as an electron donor for plastidial 2-Cys peroxiredoxins and participates in a NADPH-dependent hydrogen peroxide scavenging system in chloroplasts in the dark. Required for chlorophyll biosynthesis and biogenesis of the photosynthetic apparatus. Activates aerobic cyclase which converts Mg-protoporhyrin monomethyl ester into protochlorophyllide. Involved in a light-dependent regulation of starch biosynthesis by redox activation of the ADP-glucose pyrophosphorylase (AGPase), a central enzyme of starch synthesis. This is NADPH-dependent thioredoxin reductase 3 from Arabidopsis thaliana (Mouse-ear cress).